The following is a 440-amino-acid chain: Chromosome partition protein MukF (440 aa).

The interval 208–236 (LSETSGTLRELQDTLEAAGDKLQANLLRI) is leucine-zipper.

It belongs to the MukF family. In terms of assembly, interacts, and probably forms a ternary complex, with MukE and MukB via its C-terminal region. The complex formation is stimulated by calcium or magnesium. It is required for an interaction between MukE and MukB.

The protein localises to the cytoplasm. It localises to the nucleoid. In terms of biological role, involved in chromosome condensation, segregation and cell cycle progression. May participate in facilitating chromosome segregation by condensation DNA from both sides of a centrally located replisome during cell division. Not required for mini-F plasmid partitioning. Probably acts via its interaction with MukB and MukE. Overexpression results in anucleate cells. It has a calcium binding activity. This Salmonella agona (strain SL483) protein is Chromosome partition protein MukF.